Reading from the N-terminus, the 169-residue chain is uncharacterized protein (169 aa).

Residues valine 18–glycine 130 enclose the HD domain.

This is an uncharacterized protein from Methanocaldococcus jannaschii (strain ATCC 43067 / DSM 2661 / JAL-1 / JCM 10045 / NBRC 100440) (Methanococcus jannaschii).